The following is a 258-amino-acid chain: Acyl-[acyl-carrier-protein]--UDP-N-acetylglucosamine O-acyltransferase (258 aa).

This sequence belongs to the transferase hexapeptide repeat family. LpxA subfamily. In terms of assembly, homotrimer.

The protein resides in the cytoplasm. It catalyses the reaction a (3R)-hydroxyacyl-[ACP] + UDP-N-acetyl-alpha-D-glucosamine = a UDP-3-O-[(3R)-3-hydroxyacyl]-N-acetyl-alpha-D-glucosamine + holo-[ACP]. It participates in glycolipid biosynthesis; lipid IV(A) biosynthesis; lipid IV(A) from (3R)-3-hydroxytetradecanoyl-[acyl-carrier-protein] and UDP-N-acetyl-alpha-D-glucosamine: step 1/6. In terms of biological role, involved in the biosynthesis of lipid A, a phosphorylated glycolipid that anchors the lipopolysaccharide to the outer membrane of the cell. The chain is Acyl-[acyl-carrier-protein]--UDP-N-acetylglucosamine O-acyltransferase from Thermodesulfovibrio yellowstonii (strain ATCC 51303 / DSM 11347 / YP87).